Reading from the N-terminus, the 348-residue chain is Bombesin receptor-activated protein C6orf89 homolog (348 aa).

At 1-58 (MDLAANEISIYDKLSETVDLVRQTGHQCGMSEKAIEKFIRQLLEKNEPQRGPPQYPLL) the chain is on the cytoplasmic side. Residues 59-79 (IAMYKVLLTLGLILFTAYFVI) traverse the membrane as a helical segment. Over 80–348 (QPFSSLAPEP…ICDGTTLSEL (269 aa)) the chain is Extracellular.

Homodimer. Interacts with BRS3. Interacts (via N-terminus) with SIN3B. Glycosylated.

The protein localises to the golgi apparatus membrane. Its subcellular location is the cytoplasm. Exhibits histone deacetylase (HDAC) enhancer properties. May play a role in cell cycle progression and wound repair of bronchial epithelial cells. This chain is Bombesin receptor-activated protein C6orf89 homolog, found in Rattus norvegicus (Rat).